Consider the following 108-residue polypeptide: Small ribosomal subunit protein uS10 (108 aa).

This sequence belongs to the universal ribosomal protein uS10 family. In terms of assembly, part of the 30S ribosomal subunit.

Its function is as follows. Involved in the binding of tRNA to the ribosomes. This Ehrlichia chaffeensis (strain ATCC CRL-10679 / Arkansas) protein is Small ribosomal subunit protein uS10.